The primary structure comprises 210 residues: Na(+)-translocating NADH-quinone reductase subunit D (210 aa).

The next 6 helical transmembrane spans lie at 10–30 (ILFAPFLDNNPIALQVLGVCS), 42–62 (FVMTLAVMFVTAFSNLFVSLI), 72–92 (IIVQMAIIASLVIVVDQVLKA), 103–123 (VFVGLIITNCIVMGRAEAYAM), 131–151 (FIDGVGNGLGYGFVLITVAFF), and 178–198 (NGLMLLAPSAFFLIGFMIWAI).

The protein belongs to the NqrDE/RnfAE family. As to quaternary structure, composed of six subunits; NqrA, NqrB, NqrC, NqrD, NqrE and NqrF.

Its subcellular location is the cell inner membrane. It catalyses the reaction a ubiquinone + n Na(+)(in) + NADH + H(+) = a ubiquinol + n Na(+)(out) + NAD(+). In terms of biological role, NQR complex catalyzes the reduction of ubiquinone-1 to ubiquinol by two successive reactions, coupled with the transport of Na(+) ions from the cytoplasm to the periplasm. NqrA to NqrE are probably involved in the second step, the conversion of ubisemiquinone to ubiquinol. This chain is Na(+)-translocating NADH-quinone reductase subunit D, found in Photobacterium profundum (strain SS9).